Here is a 491-residue protein sequence, read N- to C-terminus: Protein nucleotidyltransferase YdiU (491 aa).

The ATP site is built by Gly-88, Gly-90, Arg-91, Lys-111, Asp-123, Gly-124, Arg-174, and Arg-181. Residue Asp-250 is the Proton acceptor of the active site. Residues Asn-251 and Asp-260 each contribute to the Mg(2+) site. Asp-260 lines the ATP pocket.

Belongs to the SELO family. The cofactor is Mg(2+). Mn(2+) serves as cofactor.

The enzyme catalyses L-seryl-[protein] + ATP = 3-O-(5'-adenylyl)-L-seryl-[protein] + diphosphate. The catalysed reaction is L-threonyl-[protein] + ATP = 3-O-(5'-adenylyl)-L-threonyl-[protein] + diphosphate. It carries out the reaction L-tyrosyl-[protein] + ATP = O-(5'-adenylyl)-L-tyrosyl-[protein] + diphosphate. It catalyses the reaction L-histidyl-[protein] + UTP = N(tele)-(5'-uridylyl)-L-histidyl-[protein] + diphosphate. The enzyme catalyses L-seryl-[protein] + UTP = O-(5'-uridylyl)-L-seryl-[protein] + diphosphate. The catalysed reaction is L-tyrosyl-[protein] + UTP = O-(5'-uridylyl)-L-tyrosyl-[protein] + diphosphate. Nucleotidyltransferase involved in the post-translational modification of proteins. It can catalyze the addition of adenosine monophosphate (AMP) or uridine monophosphate (UMP) to a protein, resulting in modifications known as AMPylation and UMPylation. The polypeptide is Protein nucleotidyltransferase YdiU (Bradyrhizobium diazoefficiens (strain JCM 10833 / BCRC 13528 / IAM 13628 / NBRC 14792 / USDA 110)).